A 178-amino-acid polypeptide reads, in one-letter code: Mediator of RNA polymerase II transcription subunit 31 (178 aa).

Positions 129–140 (EGQELEESEDEA) are enriched in acidic residues. A disordered region spans residues 129-178 (EGQELEESEDEADIRQKDTEDEDDEETMKKPDADTAEKNSTTSTVSKKEK). A compositionally biased stretch (basic and acidic residues) spans 155-165 (TMKKPDADTAE). A compositionally biased stretch (polar residues) spans 166 to 178 (KNSTTSTVSKKEK).

This sequence belongs to the Mediator complex subunit 31 family. Component of the Mediator complex.

It is found in the nucleus. Component of the Mediator complex, a coactivator involved in the regulated transcription of nearly all RNA polymerase II-dependent genes. Mediator functions as a bridge to convey information from gene-specific regulatory proteins to the basal RNA polymerase II transcription machinery. Mediator is recruited to promoters by direct interactions with regulatory proteins and serves as a scaffold for the assembly of a functional preinitiation complex with RNA polymerase II and the general transcription factors. The polypeptide is Mediator of RNA polymerase II transcription subunit 31 (Caenorhabditis elegans).